A 251-amino-acid polypeptide reads, in one-letter code: Large ribosomal subunit protein uL3 (251 aa).

At glutamine 151 the chain carries N5-methylglutamine. The tract at residues 214 to 251 (KDAPFPAGLKSAANSNSAPTETPAEEVAAPEATEGQEG) is disordered. Over residues 231-251 (APTETPAEEVAAPEATEGQEG) the composition is skewed to low complexity.

It belongs to the universal ribosomal protein uL3 family. Part of the 50S ribosomal subunit. Forms a cluster with proteins L14 and L19. Methylated by PrmB.

One of the primary rRNA binding proteins, it binds directly near the 3'-end of the 23S rRNA, where it nucleates assembly of the 50S subunit. The protein is Large ribosomal subunit protein uL3 of Rhizorhabdus wittichii (strain DSM 6014 / CCUG 31198 / JCM 15750 / NBRC 105917 / EY 4224 / RW1) (Sphingomonas wittichii).